We begin with the raw amino-acid sequence, 292 residues long: Ribonuclease T2-like (292 aa).

The first 23 residues, 1 to 23 (MAKTASAMLFLYLLLSRCLLSHA), serve as a signal peptide directing secretion. 5 disulfides stabilise this stretch: C42/C61, C50/C103, C60/C177, C111/C169, and C246/C280. Residue N52 is glycosylated (N-linked (GlcNAc...) asparagine). Residues H96, E162, and H166 contribute to the active site.

Belongs to the RNase T2 family.

Its subcellular location is the vacuole lumen. The protein localises to the cytoplasm. It carries out the reaction a ribonucleotidyl-ribonucleotide-RNA + H2O = a 3'-end 3'-phospho-ribonucleotide-RNA + a 5'-end dephospho-ribonucleoside-RNA + H(+). Functionally, rnase which modulates cell survival under stress conditions. Released from the vacuole to the cytoplasm during stress to promote tRNA and rRNA cleavage and to activate separately a downstream pathway that promotes cell death. Involved in cell size, vacuolar morphology and growth at high temperatures and high salt concentration. The protein is Ribonuclease T2-like (RNY1) of Eremothecium gossypii (strain ATCC 10895 / CBS 109.51 / FGSC 9923 / NRRL Y-1056) (Yeast).